The following is a 195-amino-acid chain: Imidazoleglycerol-phosphate dehydratase (195 aa).

This sequence belongs to the imidazoleglycerol-phosphate dehydratase family.

Its subcellular location is the cytoplasm. The catalysed reaction is D-erythro-1-(imidazol-4-yl)glycerol 3-phosphate = 3-(imidazol-4-yl)-2-oxopropyl phosphate + H2O. It functions in the pathway amino-acid biosynthesis; L-histidine biosynthesis; L-histidine from 5-phospho-alpha-D-ribose 1-diphosphate: step 6/9. The protein is Imidazoleglycerol-phosphate dehydratase of Ruegeria sp. (strain TM1040) (Silicibacter sp.).